Consider the following 111-residue polypeptide: Photosystem II reaction center Psb28 protein (111 aa).

The protein belongs to the Psb28 family. As to quaternary structure, part of the photosystem II complex.

The protein localises to the cellular thylakoid membrane. In Acaryochloris marina (strain MBIC 11017), this protein is Photosystem II reaction center Psb28 protein.